We begin with the raw amino-acid sequence, 323 residues long: Putative dTDP-D-glucose 4,6-dehydratase (323 aa).

Threonine 124 is a binding site for substrate. Aspartate 125 functions as the Proton donor in the catalytic mechanism. Catalysis depends on proton acceptor residues glutamate 126 and tyrosine 149.

This sequence belongs to the NAD(P)-dependent epimerase/dehydratase family. dTDP-glucose dehydratase subfamily. NAD(+) is required as a cofactor.

The catalysed reaction is dTDP-alpha-D-glucose = dTDP-4-dehydro-6-deoxy-alpha-D-glucose + H2O. The chain is Putative dTDP-D-glucose 4,6-dehydratase from Acanthamoeba polyphaga mimivirus (APMV).